The primary structure comprises 291 residues: Undecaprenyl-diphosphatase (291 aa).

The next 8 membrane-spanning stretches (helical) occupy residues 1 to 21 (MFIIELIKGIILGVVEGLTEF), 48 to 68 (SAFTFKIVIQLGSVFAAAWVF), 102 to 122 (LHVLVGMVPAGILGLLFDDFI), 126 to 146 (LFSVPTVMIGLFVGAIYMIIA), 162 to 182 (ISYFQAFVIGISQAVAMWPGF), 203 to 223 (SDFTFIMAVPIMLAASGLSLL), 231 to 251 (IADIPFYILGFLAAFTVGLIA), and 267 to 287 (FAIYRIVLVIFIAILYFGFGI).

The protein belongs to the UppP family.

Its subcellular location is the cell membrane. The catalysed reaction is di-trans,octa-cis-undecaprenyl diphosphate + H2O = di-trans,octa-cis-undecaprenyl phosphate + phosphate + H(+). In terms of biological role, catalyzes the dephosphorylation of undecaprenyl diphosphate (UPP). Confers resistance to bacitracin. The sequence is that of Undecaprenyl-diphosphatase from Staphylococcus aureus (strain COL).